We begin with the raw amino-acid sequence, 257 residues long: UPF0246 protein YaaA (257 aa).

It belongs to the UPF0246 family.

In Salmonella typhi, this protein is UPF0246 protein YaaA.